The primary structure comprises 798 residues: Transferrin receptor protein 2 (798 aa).

The Cytoplasmic segment spans residues 1–81 (MEQRWGLLRR…WAAAGRKAAP (81 aa)). Positions 23–26 (YRRV) match the Endocytosis signal motif. Residues 82–102 (YLVLITLLIFTGAFLLGYVAF) traverse the membrane as a helical; Signal-anchor for type II membrane protein segment. The Extracellular portion of the chain corresponds to 103–798 (RGSCQACGDS…GDVWNIDNNF (696 aa)). Residues N235, N334, and N535 are each glycosylated (N-linked (GlcNAc...) asparagine).

It belongs to the peptidase M28 family. M28B subfamily. Predominantly expressed in liver. Also expressed in kidney, spleen, brain, lung, heart and muscle with very low expression in kidney, muscle and heart.

It is found in the cell membrane. It localises to the cytoplasm. In terms of biological role, mediates cellular uptake of transferrin-bound iron in a non-iron dependent manner. May be involved in iron metabolism, hepatocyte function and erythrocyte differentiation. The sequence is that of Transferrin receptor protein 2 (Tfr2) from Mus musculus (Mouse).